Consider the following 861-residue polypeptide: Actin-binding LIM protein 1 (861 aa).

LIM zinc-binding domains lie at 97-156 (IHCH…MYGT), 156-216 (TRCH…MSSS), 224-283 (SNCA…LFGV), and 283-343 (VKCE…TKTE). Residue Ser-216 is modified to Phosphoserine. Positions 374–414 (LQLLSPPCLTNSNKNPRQPTRTSSESIYSRPGSSIPGSPGH) are disordered. The span at 381–400 (CLTNSNKNPRQPTRTSSESI) shows a compositional bias: polar residues. Positions 404–413 (PGSSIPGSPG) are enriched in low complexity. Phosphoserine is present on Ser-411. Residues Tyr-417 and Tyr-440 each carry the phosphotyrosine modification. 2 disordered regions span residues 459 to 590 (EDKQ…PTYA) and 634 to 682 (FPAA…ELLR). Phosphoserine occurs at positions 466, 470, and 475. The segment covering 467–478 (LGESPRTLSPTP) has biased composition (polar residues). The residue at position 477 (Thr-477) is a Phosphothreonine. Ser-479 is modified (phosphoserine). A Phosphotyrosine modification is found at Tyr-483. The span at 493–518 (RSTSQGSINSPVYSRHSYTPTTSRSP) shows a compositional bias: polar residues. Phosphoserine is present on residues Ser-496, Ser-499, and Ser-502. Residues 536 to 546 (PLRTSSFSSTH) are compositionally biased toward low complexity. Phosphoserine occurs at positions 582 and 671. Residues 673 to 723 (REEDEEELLRRRQLQEEQLMKLNSGLGQLILKEEMEKESRERASLASRYDS) adopt a coiled-coil conformation. A Glycyl lysine isopeptide (Lys-Gly) (interchain with G-Cter in SUMO2) cross-link involves residue Lys-704. The disordered stretch occupies residues 713 to 748 (ERASLASRYDSPLHSASHAPSSKTSSLPGYGKNGLH). Ser-723, Ser-738, Ser-760, and Ser-789 each carry phosphoserine. Residues 724 to 738 (PLHSASHAPSSKTSS) show a composition bias toward low complexity. The 69-residue stretch at 793–861 (MLEPKIFPYE…NDMKKKAKLF (69 aa)) folds into the HP domain.

As to quaternary structure, binds F-actin. Interacts with ABRA. In terms of tissue distribution, isoform 1 is detected in adult retina, where it is highly expressed in the ganglion layer. Detected in rod inner segment. Isoform 2 is highly expressed in adult retina, brain, kidney and heart. Isoform 3 is highly expressed in adult retina, brain, kidney, liver, skeletal muscle, spleen and heart. Detected in embryonic retina, brain, spinal cord, peripheral sensory ganglia and thymus.

It localises to the cytoplasm. Its subcellular location is the cytoskeleton. May act as scaffold protein. May play a role in the development of the retina. Has been suggested to play a role in axon guidance. In Mus musculus (Mouse), this protein is Actin-binding LIM protein 1 (Ablim1).